Consider the following 1067-residue polypeptide: Carbamoyl phosphate synthase large chain (1067 aa).

Residues 1–401 (MPLNKDIKKV…AFLKGIRSLE (401 aa)) form a carboxyphosphate synthetic domain region. Residues Arg-129, Arg-169, Gly-175, Gly-176, Lys-208, Val-210, Glu-215, Gly-241, Ile-242, His-243, Gln-284, and Glu-298 each coordinate ATP. In terms of domain architecture, ATP-grasp 1 spans 133–327 (RDMMNRINQP…IAKVAAKIAL (195 aa)). Gln-284, Glu-298, and Asn-300 together coordinate Mg(2+). The Mn(2+) site is built by Gln-284, Glu-298, and Asn-300. Residues 402–549 (IGKYSLEHKK…YSTYEQYDEV (148 aa)) form an oligomerization domain region. A carbamoyl phosphate synthetic domain region spans residues 550–932 (VVSDNKKVVV…ALYKGFVGAS (383 aa)). Residues 674-864 (DDLLERLNIA…IVDIATRIML (191 aa)) form the ATP-grasp 2 domain. ATP contacts are provided by Arg-710, Lys-749, Leu-751, Glu-755, Gly-780, Val-781, His-782, Ser-783, Gln-823, and Glu-835. Gln-823, Glu-835, and Asn-837 together coordinate Mg(2+). Mn(2+) contacts are provided by Gln-823, Glu-835, and Asn-837. Residues 933-1067 (MYTGDKGKTI…NRELEVFNLI (135 aa)) enclose the MGS-like domain. Residues 933–1067 (MYTGDKGKTI…NRELEVFNLI (135 aa)) are allosteric domain.

This sequence belongs to the CarB family. Composed of two chains; the small (or glutamine) chain promotes the hydrolysis of glutamine to ammonia, which is used by the large (or ammonia) chain to synthesize carbamoyl phosphate. Tetramer of heterodimers (alpha,beta)4. The cofactor is Mg(2+). It depends on Mn(2+) as a cofactor.

It carries out the reaction hydrogencarbonate + L-glutamine + 2 ATP + H2O = carbamoyl phosphate + L-glutamate + 2 ADP + phosphate + 2 H(+). The enzyme catalyses hydrogencarbonate + NH4(+) + 2 ATP = carbamoyl phosphate + 2 ADP + phosphate + 2 H(+). It functions in the pathway amino-acid biosynthesis; L-arginine biosynthesis; carbamoyl phosphate from bicarbonate: step 1/1. It participates in pyrimidine metabolism; UMP biosynthesis via de novo pathway; (S)-dihydroorotate from bicarbonate: step 1/3. Its function is as follows. Large subunit of the glutamine-dependent carbamoyl phosphate synthetase (CPSase). CPSase catalyzes the formation of carbamoyl phosphate from the ammonia moiety of glutamine, carbonate, and phosphate donated by ATP, constituting the first step of 2 biosynthetic pathways, one leading to arginine and/or urea and the other to pyrimidine nucleotides. The large subunit (synthetase) binds the substrates ammonia (free or transferred from glutamine from the small subunit), hydrogencarbonate and ATP and carries out an ATP-coupled ligase reaction, activating hydrogencarbonate by forming carboxy phosphate which reacts with ammonia to form carbamoyl phosphate. This is Carbamoyl phosphate synthase large chain from Clostridium perfringens (strain SM101 / Type A).